Reading from the N-terminus, the 1502-residue chain is E3 ubiquitin-protein ligase UPL4 (1502 aa).

Residues 1 to 21 show a composition bias toward basic and acidic residues; sequence MENRGQKRMEVVEELPADKRA. The segment at 1-107 is disordered; the sequence is MENRGQKRME…DYQRQRSSGD (107 aa). Residues 22–46 are compositionally biased toward polar residues; sequence CNSQDFRPSTSGSSVQAQANDTNPG. A compositionally biased stretch (acidic residues) spans 67–90; sequence DEEEQEEQDKEDSDYGSCDSDEED. Over residues 91–107 the composition is skewed to basic and acidic residues; that stretch reads PRQRVLQDYQRQRSSGD. 4 ARM repeats span residues 143-183, 186-226, 228-265, and 267-306; these read EESL…YLCD, PPSV…KISR, EPVACLNAGAIMAVLSFIDFFSTSIQRVAISTVVNICK, and LSSESPSPFMDAVPILCTLLQYEDRQLVENVAICLTKIAD. Positions 833–881 are disordered; that stretch reads CQAESSSPMEIDSESSDASQLQGSQVEDQTQLPGQQNASSSETSSEKED. Polar residues predominate over residues 849–875; it reads DASQLQGSQVEDQTQLPGQQNASSSET. The segment at 1022 to 1096 is K-box; it reads RPVPHSEFVS…IRHHPQHLSS (75 aa). Positions 1128–1502 constitute an HECT domain; sequence KMMELYGNQK…TEGQGSFHLS (375 aa). Cysteine 1469 serves as the catalytic Glycyl thioester intermediate.

The protein belongs to the UPL family. K-HECT subfamily.

The enzyme catalyses S-ubiquitinyl-[E2 ubiquitin-conjugating enzyme]-L-cysteine + [acceptor protein]-L-lysine = [E2 ubiquitin-conjugating enzyme]-L-cysteine + N(6)-ubiquitinyl-[acceptor protein]-L-lysine.. Its pathway is protein modification; protein ubiquitination. Its function is as follows. Probable E3 ubiquitin-protein ligase which mediates ubiquitination and subsequent proteasomal degradation of target proteins. The chain is E3 ubiquitin-protein ligase UPL4 (UPL4) from Arabidopsis thaliana (Mouse-ear cress).